The following is a 256-amino-acid chain: Glutamate racemase (256 aa).

Residues 5 to 6 (DS) and 37 to 38 (YG) each bind substrate. Catalysis depends on Cys-69, which acts as the Proton donor/acceptor. 70–71 (NT) serves as a coordination point for substrate. Residue Cys-181 is the Proton donor/acceptor of the active site. Position 182-183 (182-183 (TH)) interacts with substrate.

Belongs to the aspartate/glutamate racemases family.

The catalysed reaction is L-glutamate = D-glutamate. It participates in cell wall biogenesis; peptidoglycan biosynthesis. In terms of biological role, provides the (R)-glutamate required for cell wall biosynthesis. In Buchnera aphidicola subsp. Schizaphis graminum (strain Sg), this protein is Glutamate racemase.